Here is a 261-residue protein sequence, read N- to C-terminus: Acyl-[acyl-carrier-protein]--UDP-N-acetylglucosamine O-acyltransferase (261 aa).

The protein belongs to the transferase hexapeptide repeat family. LpxA subfamily. In terms of assembly, homotrimer.

Its subcellular location is the cytoplasm. It catalyses the reaction a (3R)-hydroxyacyl-[ACP] + UDP-N-acetyl-alpha-D-glucosamine = a UDP-3-O-[(3R)-3-hydroxyacyl]-N-acetyl-alpha-D-glucosamine + holo-[ACP]. It functions in the pathway glycolipid biosynthesis; lipid IV(A) biosynthesis; lipid IV(A) from (3R)-3-hydroxytetradecanoyl-[acyl-carrier-protein] and UDP-N-acetyl-alpha-D-glucosamine: step 1/6. Functionally, involved in the biosynthesis of lipid A, a phosphorylated glycolipid that anchors the lipopolysaccharide to the outer membrane of the cell. The protein is Acyl-[acyl-carrier-protein]--UDP-N-acetylglucosamine O-acyltransferase of Trichlorobacter lovleyi (strain ATCC BAA-1151 / DSM 17278 / SZ) (Geobacter lovleyi).